The following is a 201-amino-acid chain: ATP-dependent Clp protease proteolytic subunit (201 aa).

The active-site Nucleophile is the S101. Residue H126 is part of the active site.

It belongs to the peptidase S14 family. As to quaternary structure, fourteen ClpP subunits assemble into 2 heptameric rings which stack back to back to give a disk-like structure with a central cavity, resembling the structure of eukaryotic proteasomes.

Its subcellular location is the cytoplasm. It carries out the reaction Hydrolysis of proteins to small peptides in the presence of ATP and magnesium. alpha-casein is the usual test substrate. In the absence of ATP, only oligopeptides shorter than five residues are hydrolyzed (such as succinyl-Leu-Tyr-|-NHMec, and Leu-Tyr-Leu-|-Tyr-Trp, in which cleavage of the -Tyr-|-Leu- and -Tyr-|-Trp bonds also occurs).. In terms of biological role, cleaves peptides in various proteins in a process that requires ATP hydrolysis. Has a chymotrypsin-like activity. Plays a major role in the degradation of misfolded proteins. The sequence is that of ATP-dependent Clp protease proteolytic subunit from Francisella philomiragia subsp. philomiragia (strain ATCC 25017 / CCUG 19701 / FSC 153 / O#319-036).